Here is a 340-residue protein sequence, read N- to C-terminus: Cathepsin B (340 aa).

Positions 1–17 are cleaved as a signal peptide; the sequence is MSWSRSILCLLGAFANA. Residues 18–79 constitute a propeptide, activation peptide; that stretch reads RSIPYYPPLS…ERVDFAEDMD (62 aa). N-linked (GlcNAc...) asparagine glycosylation occurs at N38. Cystine bridges form between C93–C122, C105–C150, C141–C208, C142–C146, C179–C212, and C187–C198. C108 is a catalytic residue. Residue N192 is glycosylated (N-linked (GlcNAc...) asparagine). Catalysis depends on residues H279 and N299.

Belongs to the peptidase C1 family. In terms of assembly, dimer of a heavy chain and a light chain cross-linked by a disulfide bond.

The protein resides in the lysosome. The catalysed reaction is Hydrolysis of proteins with broad specificity for peptide bonds. Preferentially cleaves -Arg-Arg-|-Xaa bonds in small molecule substrates (thus differing from cathepsin L). In addition to being an endopeptidase, shows peptidyl-dipeptidase activity, liberating C-terminal dipeptides.. Functionally, thiol protease which is believed to participate in intracellular degradation and turnover of proteins. Has also been implicated in tumor invasion and metastasis. The sequence is that of Cathepsin B (CTSB) from Gallus gallus (Chicken).